We begin with the raw amino-acid sequence, 399 residues long: Transcription termination factor 1, mitochondrial (399 aa).

A mitochondrion-targeting transit peptide spans 1-57 (MQSLSLGQTSISKGLNYLTIMAPGNLWHMRNNFLFGSRCWMTRFSAENIFKSVSFRL). Interaction with DNA regions lie at residues 169–170 (RS), 247–251 (QSTKR), 324–331 (AEKKFNDK), 355–358 (SIST), and 384–391 (SKKRYEAK).

Belongs to the mTERF family. In terms of assembly, monomer. Post-translationally, phosphoprotein with mostly four phosphate groups. While the DNA-binding activity is unaffected by the phosphorylation state, only the phosphorylated form of the protein is active for termination activity. Functioning seems to be regulated by phosphorylation.

The protein resides in the mitochondrion. Transcription termination factor. Binds to a 28 bp region within the tRNA(Leu(uur)) gene at a position immediately adjacent to and downstream of the 16S rRNA gene; this region comprises a tridecamer sequence critical for directing accurate termination. Binds DNA along the major grove and promotes DNA bending and partial unwinding. Promotes base flipping. Transcription termination activity appears to be polarized with highest specificity for transcripts initiated on the light strand. The protein is Transcription termination factor 1, mitochondrial (MTERF1) of Homo sapiens (Human).